The following is a 472-amino-acid chain: Glutamate--tRNA ligase 2 (472 aa).

A 'HIGH' region motif is present at residues 12-22 (PSPSGLLHLGN). Positions 253 to 257 (PLSKR) match the 'KMSKS' region motif. K256 provides a ligand contact to ATP.

Belongs to the class-I aminoacyl-tRNA synthetase family. Glutamate--tRNA ligase type 1 subfamily. Monomer.

The protein localises to the cytoplasm. It catalyses the reaction tRNA(Glu) + L-glutamate + ATP = L-glutamyl-tRNA(Glu) + AMP + diphosphate. Catalyzes the attachment of glutamate to tRNA(Glu) in a two-step reaction: glutamate is first activated by ATP to form Glu-AMP and then transferred to the acceptor end of tRNA(Glu). In Nitrosococcus oceani (strain ATCC 19707 / BCRC 17464 / JCM 30415 / NCIMB 11848 / C-107), this protein is Glutamate--tRNA ligase 2.